The primary structure comprises 737 residues: Translation initiation factor IF-2 (737 aa).

Residues 55 to 152 form a disordered region; sequence KKKEHIQHNK…PVPPRKNKPL (98 aa). A compositionally biased stretch (basic and acidic residues) spans 60-70; the sequence is IQHNKNKDNFH. The segment covering 88-98 has biased composition (basic residues); that stretch reads KNVHKNNRKRS. A compositionally biased stretch (low complexity) spans 105 to 121; sequence NNNAKNGQRNNRNNRSN. The span at 122–131 shows a compositional bias: basic residues; the sequence is NKFKNKRNNN. Over residues 132–142 the composition is skewed to low complexity; that stretch reads NKRNNNFKKGN. A tr-type G domain is found at 238 to 407; it reads KRPPVVTIMG…LLEAEMLELH (170 aa). The segment at 247-254 is G1; the sequence is GHVDHGKT. 247 to 254 provides a ligand contact to GTP; it reads GHVDHGKT. The G2 stretch occupies residues 272 to 276; sequence GITQH. Residues 293-296 form a G3 region; sequence DTPG. Residues 293–297 and 347–350 each bind GTP; these read DTPGH and NKID. The tract at residues 347–350 is G4; that stretch reads NKID. The interval 383 to 385 is G5; sequence SAK.

This sequence belongs to the TRAFAC class translation factor GTPase superfamily. Classic translation factor GTPase family. IF-2 subfamily.

It localises to the cytoplasm. Its function is as follows. One of the essential components for the initiation of protein synthesis. Protects formylmethionyl-tRNA from spontaneous hydrolysis and promotes its binding to the 30S ribosomal subunits. Also involved in the hydrolysis of GTP during the formation of the 70S ribosomal complex. The polypeptide is Translation initiation factor IF-2 (Ligilactobacillus salivarius (strain UCC118) (Lactobacillus salivarius)).